The primary structure comprises 492 residues: Catalase isozyme 3 (492 aa).

Catalysis depends on residues His-65 and Asn-138. Tyr-348 contributes to the heme binding site.

It belongs to the catalase family. As to quaternary structure, homotetramer. Heme is required as a cofactor.

It localises to the peroxisome. It catalyses the reaction 2 H2O2 = O2 + 2 H2O. Its function is as follows. Occurs in almost all aerobically respiring organisms and serves to protect cells from the toxic effects of hydrogen peroxide. The polypeptide is Catalase isozyme 3 (CAT3) (Nicotiana plumbaginifolia (Leadwort-leaved tobacco)).